The sequence spans 515 residues: Cytochrome P450 705A22 (515 aa).

Residues F9–F29 form a helical membrane-spanning segment. C454 provides a ligand contact to heme.

Belongs to the cytochrome P450 family. Requires heme as cofactor.

The protein localises to the membrane. Its function is as follows. Plays a role in the gravitropic response of the inflorescence stems and roots. May affect the synthesis of flavonols that have a role in regulating auxin transport. This chain is Cytochrome P450 705A22, found in Arabidopsis thaliana (Mouse-ear cress).